We begin with the raw amino-acid sequence, 351 residues long: N-acetyl-gamma-glutamyl-phosphate reductase (351 aa).

Residue cysteine 154 is part of the active site.

It belongs to the NAGSA dehydrogenase family. Type 1 subfamily.

The protein localises to the cytoplasm. It carries out the reaction N-acetyl-L-glutamate 5-semialdehyde + phosphate + NADP(+) = N-acetyl-L-glutamyl 5-phosphate + NADPH + H(+). It functions in the pathway amino-acid biosynthesis; L-arginine biosynthesis; N(2)-acetyl-L-ornithine from L-glutamate: step 3/4. Functionally, catalyzes the NADPH-dependent reduction of N-acetyl-5-glutamyl phosphate to yield N-acetyl-L-glutamate 5-semialdehyde. The sequence is that of N-acetyl-gamma-glutamyl-phosphate reductase from Prochlorococcus marinus (strain MIT 9215).